A 246-amino-acid polypeptide reads, in one-letter code: MKYDIIGDIHGCFQEFQDLTTKLGYSWDSGIPIHNAKRRLAFVGDITDRGPHSLRMIEIVWELVINRKDAYYAPGNHCNKLYRFFLGRNVTIAHGLETTVAEYEALPSNKQQIIKEKFITLYEQSPLYHILDEKNLTVCHAGIRQDYIGRQDKKVQTFVLYGDITGEKHPDGSPVRQDWAKEYKGETWIVYGHTPVNEPRFVNHTVNIDTGAVFGGKLTGLRYPELETVSVPSSLPFVPEKFRPIS.

The protein belongs to the PrpE family. The cofactor is Ni(2+).

It catalyses the reaction P(1),P(4)-bis(5'-guanosyl) tetraphosphate + H2O = GMP + GTP + 2 H(+). Functionally, asymmetrically hydrolyzes Ap4p to yield AMP and ATP. The sequence is that of Bis(5'-nucleosyl)-tetraphosphatase PrpE [asymmetrical] from Bacillus mycoides (strain KBAB4) (Bacillus weihenstephanensis).